We begin with the raw amino-acid sequence, 397 residues long: MKILVINCGSSSLKYQLIDMTNEDVLVKGLVERIGIEGSRIKHEKKGMDAVLIEEKMNDHKRAIQLVLEALIDKNHGVVKSMDEITAVGHRVVHGGEEFNKSVLLDDRVMAGIKECIDLAPLHNPANIMGIEACKALMPKTPMVAVFDTAFHQTMPAENYIYALPYEYYEKYKIRRYGFHGTSHRFVSEKASETLKNNSADFKVITCHLGNGSSLAAIKGGKCVDTSMGLTPLEGLVMGTRSGDLDPAILPFIMNKEKLSADEMSNVLNKKSGVFGISGVSSDFRDIETAAKEGNKRAQLALDVFCNRVRKYIASYAAQLGGVDALVFTAGIGENSIELREKICHGLEFLGVELDSEKNKVRGKLTDASKASSKVKVLIIPTNEELMIAKDTMALVK.

Asparagine 7 contributes to the Mg(2+) binding site. Lysine 14 contributes to the ATP binding site. A substrate-binding site is contributed by arginine 91. Aspartate 148 acts as the Proton donor/acceptor in catalysis. ATP-binding positions include 208–212 (HLGNG), 283–285 (DFR), and 331–335 (GIGEN). Glutamate 384 provides a ligand contact to Mg(2+).

It belongs to the acetokinase family. As to quaternary structure, homodimer. Mg(2+) is required as a cofactor. Mn(2+) serves as cofactor.

The protein localises to the cytoplasm. The enzyme catalyses acetate + ATP = acetyl phosphate + ADP. It functions in the pathway metabolic intermediate biosynthesis; acetyl-CoA biosynthesis; acetyl-CoA from acetate: step 1/2. Catalyzes the formation of acetyl phosphate from acetate and ATP. Can also catalyze the reverse reaction. The sequence is that of Acetate kinase from Treponema denticola (strain ATCC 35405 / DSM 14222 / CIP 103919 / JCM 8153 / KCTC 15104).